The sequence spans 265 residues: Hydroxyethylthiazole kinase (265 aa).

Met-43 is a substrate binding site. 2 residues coordinate ATP: Lys-118 and Thr-165. Residue Gly-192 coordinates substrate.

The protein belongs to the Thz kinase family. Mg(2+) is required as a cofactor.

The catalysed reaction is 5-(2-hydroxyethyl)-4-methylthiazole + ATP = 4-methyl-5-(2-phosphooxyethyl)-thiazole + ADP + H(+). It participates in cofactor biosynthesis; thiamine diphosphate biosynthesis; 4-methyl-5-(2-phosphoethyl)-thiazole from 5-(2-hydroxyethyl)-4-methylthiazole: step 1/1. Catalyzes the phosphorylation of the hydroxyl group of 4-methyl-5-beta-hydroxyethylthiazole (THZ). This Pyrococcus abyssi (strain GE5 / Orsay) protein is Hydroxyethylthiazole kinase.